The sequence spans 256 residues: tRNA (guanine-N(1)-)-methyltransferase (256 aa).

Residues Gly-119 and Ile-139–Val-144 each bind S-adenosyl-L-methionine.

This sequence belongs to the RNA methyltransferase TrmD family. Homodimer.

The protein resides in the cytoplasm. The enzyme catalyses guanosine(37) in tRNA + S-adenosyl-L-methionine = N(1)-methylguanosine(37) in tRNA + S-adenosyl-L-homocysteine + H(+). Specifically methylates guanosine-37 in various tRNAs. The chain is tRNA (guanine-N(1)-)-methyltransferase from Nitrosospira multiformis (strain ATCC 25196 / NCIMB 11849 / C 71).